The chain runs to 365 residues: Bifunctional chorismate mutase/prephenate dehydratase (365 aa).

The 96-residue stretch at 1 to 96 folds into the Chorismate mutase domain; sequence MADQDQLKAL…SCLALEQPLK (96 aa). Substrate-binding residues include Arg-11, Arg-28, Lys-39, and Glu-57. Residues 97–272 form the Prephenate dehydratase domain; it reads VAYLGPEGTF…NSTRFLIIGN (176 aa). The ACT domain occupies 284–361; it reads SIIVSMRNKP…VALKVLGSYP (78 aa).

The protein resides in the cytoplasm. The catalysed reaction is chorismate = prephenate. It catalyses the reaction prephenate + H(+) = 3-phenylpyruvate + CO2 + H2O. The protein operates within amino-acid biosynthesis; L-phenylalanine biosynthesis; phenylpyruvate from prephenate: step 1/1. It participates in metabolic intermediate biosynthesis; prephenate biosynthesis; prephenate from chorismate: step 1/1. Catalyzes the Claisen rearrangement of chorismate to prephenate and the decarboxylation/dehydration of prephenate to phenylpyruvate. This Pseudomonas aeruginosa (strain ATCC 15692 / DSM 22644 / CIP 104116 / JCM 14847 / LMG 12228 / 1C / PRS 101 / PAO1) protein is Bifunctional chorismate mutase/prephenate dehydratase (pheA).